Consider the following 130-residue polypeptide: Hypocretin neuropeptide precursor (130 aa).

An N-terminal signal peptide occupies residues 1–32; that stretch reads MNFPSTKVPWAAVTLLLLLLLPPALLSLGVDA. Glutamine 33 carries the pyrrolidone carboxylic acid modification. 2 disulfide bridges follow: cysteine 38–cysteine 44 and cysteine 39–cysteine 46. At leucine 65 the chain carries Leucine amide. The residue at position 96 (methionine 96) is a Methionine amide. Residues 97–130 constitute a propeptide that is removed on maturation; that stretch reads GRRAGAELEPHPCSGRGCPTVTTTALAPRGGSGV.

This sequence belongs to the orexin family. In terms of processing, specific enzymatic cleavages at paired basic residues yield the different active peptides. As to expression, restricted to neuronal cell bodies of the dorsal and lateral hypothalamus.

The protein resides in the rough endoplasmic reticulum. It is found in the cytoplasmic vesicle. The protein localises to the synapse. Neuropeptides that play a significant role in the regulation of food intake and sleep-wakefulness, possibly by coordinating the complex behavioral and physiologic responses of these complementary homeostatic functions. A broader role in the homeostatic regulation of energy metabolism, autonomic function, hormonal balance and the regulation of body fluids, is also suggested. Functionally, binds to orexin receptors HCRTR1/OX1R and HCRTR2/OX2R with a high affinity. Stimulates food intake. Modulates pituitary luteinizing hormone secretion in an ovarian steroid-dependent manner. In terms of biological role, binds to orexin receptor HCRTR2/OX2R only. Stimulates food intake. Modulates pituitary luteinizing hormone secretion in an ovarian steroid-dependent manner. This Mus musculus (Mouse) protein is Hypocretin neuropeptide precursor (Hcrt).